A 479-amino-acid polypeptide reads, in one-letter code: MGNSDSLKAVWFRRDFRLHDHTALKHAIEAIEKHGGKWLAFFYLDPKTASVEPVHHDYFFQTVMQFKQMLKTNGGDLYIITGTIEGALSKLLQAFPEIDAVYANDDRVGDGRLRDEAAEHFLAKQSIPFYTFEDAYLTEPDQVLKKDGTPYKVFTPYYKAWAKERKRTPAVIKRDVLLGSVHKGTAPDREAETLFNNLIKKCSYDWSAIGEEHAIKRLQMFTKKRLSGYKANRDFPSITGTSRLSPYIKTGAVSSRSIYYHILNAEADSYSAETFLKELAWRDFYRMVHFYEPDCKDREIMEGYRELNWSHDQDDLTSWKRGETGFPIVDAGMRQLLNEGWMHNRLRMITASFLTKDLLIDWRLGERYFERMLIDYDPSSNIGGWQWAASVGTDAVPYFRIFNPVTQSKRFDENGTYIRTYIPELNHVPDHYIHEPWKMSEEEQVKYKCRLDEDYPLPIVDHSKQRKKALSFFKGDDEE.

A Photolyase/cryptochrome alpha/beta domain is found at 6-137; the sequence is SLKAVWFRRD…PFYTFEDAYL (132 aa). An FAD-binding site is contributed by Tyr229. Arg233 provides a ligand contact to DNA. FAD contacts are provided by residues 241–245 and 278–285; these read TSRLS and ELAWRDFY. Interaction with DNA regions lie at residues 278 to 285 and 344 to 345; these read ELAWRDFY and NR. 375 to 377 is a binding site for FAD; it reads DYD. A DNA-binding site is contributed by Gln407.

The protein belongs to the DNA photolyase class-1 family. As to quaternary structure, monomer. It depends on FAD as a cofactor. Requires (6R)-5,10-methylene-5,6,7,8-tetrahydrofolate as cofactor.

The enzyme catalyses cyclobutadipyrimidine (in DNA) = 2 pyrimidine residues (in DNA).. Involved in repair of UV radiation-induced DNA damage. Catalyzes the light-dependent monomerization (300-600 nm) of cyclobutyl pyrimidine dimers (in cis-syn configuration), which are formed between adjacent bases on the same DNA strand upon exposure to ultraviolet radiation. This chain is Deoxyribodipyrimidine photo-lyase (phr), found in Alkalihalophilus pseudofirmus (strain ATCC BAA-2126 / JCM 17055 / OF4) (Bacillus pseudofirmus).